Here is a 690-residue protein sequence, read N- to C-terminus: Ras guanyl-releasing protein 3 (690 aa).

Positions 3 to 125 (SSGLGKAATL…SLIDISSIPS (123 aa)) constitute an N-terminal Ras-GEF domain. The Ras-GEF domain maps to 152–383 (EPIELAEHLT…YKLSLVLEPR (232 aa)). EF-hand domains lie at 420-455 (HIRK…FPFL) and 458-484 (FCVL…AKSQ). Ca(2+) contacts are provided by Asp-433, Asp-435, Asp-437, Tyr-439, Asp-444, Asp-462, Asp-464, Asp-466, and Glu-473. Residues 494–544 (IHNFQEMTYLKPTFCEHCAGFLWGIIKQGYKCKDCGANCHKQCKDLLVLAC) form a Phorbol-ester/DAG-type zinc finger. Positions 667 to 690 (VDRGTEFELDQDEGEETRQDGEDG) are disordered.

Belongs to the RASGRP family.

In terms of biological role, guanine nucleotide exchange factor (GEF) for Ras and Rap1. This chain is Ras guanyl-releasing protein 3 (RASGRP3), found in Homo sapiens (Human).